A 1462-amino-acid chain; its full sequence is Gag-Pol polyprotein (1462 aa).

Gly2 carries N-myristoyl glycine; by host lipidation. The segment at 7–31 (VLRGKKADELEKVRLRPNGKKRYRL) is interaction with Gp41. Residues 16 to 22 (LEKVRLR) carry the Nuclear export signal motif. The Nuclear localization signal motif lies at 26–32 (KKRYRLK). Residues 191–228 (NCVGDHQAAMQIIREIINEEAADWDAQHPIPGPLPAGQ) are interaction with human PPIA/CYPA and NUP153. The segment at 279–365 (YNPTNILDVK…GGPSQKARLM (87 aa)) is dimerization/Multimerization of capsid protein p24. CCHC-type zinc fingers lie at residues 389 to 406 (IRCW…QCRA) and 410 to 427 (QGCW…NCPE). The disordered stretch occupies residues 433 to 509 (LDGPTGKAAP…DAPQRGDRGL (77 aa)). Over residues 448-465 (PSSSGADTNSTPNRSSSG) the composition is skewed to polar residues. Composition is skewed to basic and acidic residues over residues 472–482 (AAREKAERAEG) and 497–507 (AGRDAPQRGDR). A dimerization of protease region spans residues 512–516 (PQFSL). The 70-residue stretch at 532 to 601 (EVLLDTGADD…PINIFGRNIL (70 aa)) folds into the Peptidase A2 domain. Asp536 acts as the For protease activity; shared with dimeric partner in catalysis. 2 dimerization of protease regions span residues 560 to 566 (GIGGFIN) and 599 to 611 (NILA…LNLP). Positions 655 to 845 (GQLEEAPPTN…PFQWMGYELW (191 aa)) constitute a Reverse transcriptase domain. Mg(2+)-binding residues include Asp720, Asp795, and Asp796. The segment at 837–845 (FQWMGYELW) is RT 'primer grip'. The Tryptophan repeat motif motif lies at 1007 to 1023 (WEQWWDNYWQVTWVPEW). Residues 1043–1166 (IPGTETFYTD…VDHLVSQGIR (124 aa)) enclose the RNase H type-1 domain. Residues Asp1052, Glu1087, Asp1107, and Asp1158 each coordinate Mg(2+). The Integrase-type zinc finger occupies 1172–1213 (EKIEPAQEEHEKYHSNIKELTHKFGIPQLVARQIVNTCAQCQ). 4 residues coordinate Zn(2+): His1181, His1185, Cys1209, and Cys1212. The region spanning 1223–1374 (VNAEIGVWQM…PAERLINMIT (152 aa)) is the Integrase catalytic domain. Mg(2+)-binding residues include Asp1233, Asp1285, and Glu1321. The integrase-type DNA-binding region spans 1392–1439 (FQVYYREGRDQLWKGPGELLWKGDGAVIVKVGADIKVVPRRKAKIIRD).

In terms of assembly, homotrimer; further assembles as hexamers of trimers. Interacts with gp41 (via C-terminus). Interacts with host CALM1; this interaction induces a conformational change in the Matrix protein, triggering exposure of the myristate group. Interacts with host AP3D1; this interaction allows the polyprotein trafficking to multivesicular bodies during virus assembly. Part of the pre-integration complex (PIC) which is composed of viral genome, matrix protein, Vpr and integrase. Homodimer; the homodimer further multimerizes as homohexamers or homopentamers. Interacts with human PPIA/CYPA. Interacts with human NUP153. Interacts with host PDZD8; this interaction stabilizes the capsid. Interacts with monkey TRIM5; this interaction destabilizes the capsid. As to quaternary structure, homodimer, whose active site consists of two apposed aspartic acid residues. In terms of assembly, heterodimer of p66 RT and p51 RT (RT p66/p51). Heterodimerization of RT is essential for DNA polymerase activity. The overall folding of the subdomains is similar in p66 RT and p51 RT but the spatial arrangements of the subdomains are dramatically different. Homotetramer; may further associate as a homohexadecamer. Part of the pre-integration complex (PIC) which is composed of viral genome, matrix protein, Vpr and integrase. Interacts with human SMARCB1/INI1 and human PSIP1/LEDGF isoform 1. Interacts with human KPNA3; this interaction might play a role in nuclear import of the pre-integration complex. Interacts with human NUP153; this interaction might play a role in nuclear import of the pre-integration complex. Requires Mg(2+) as cofactor. Post-translationally, specific enzymatic cleavages by the viral protease yield mature proteins. The protease is released by autocatalytic cleavage. The polyprotein is cleaved during and after budding, this process is termed maturation. Proteolytic cleavage of p66 RT removes the RNase H domain to yield the p51 RT subunit. Nucleocapsid protein p7 might be further cleaved after virus entry.

The protein resides in the host cell membrane. It is found in the host endosome. Its subcellular location is the host multivesicular body. It localises to the virion membrane. The protein localises to the host nucleus. The protein resides in the host cytoplasm. It is found in the virion. It catalyses the reaction Endopeptidase for which the P1 residue is preferably hydrophobic.. The enzyme catalyses Endohydrolysis of RNA in RNA/DNA hybrids. Three different cleavage modes: 1. sequence-specific internal cleavage of RNA. Human immunodeficiency virus type 1 and Moloney murine leukemia virus enzymes prefer to cleave the RNA strand one nucleotide away from the RNA-DNA junction. 2. RNA 5'-end directed cleavage 13-19 nucleotides from the RNA end. 3. DNA 3'-end directed cleavage 15-20 nucleotides away from the primer terminus.. It carries out the reaction 3'-end directed exonucleolytic cleavage of viral RNA-DNA hybrid.. The catalysed reaction is DNA(n) + a 2'-deoxyribonucleoside 5'-triphosphate = DNA(n+1) + diphosphate. With respect to regulation, protease: The viral protease is inhibited by many synthetic protease inhibitors (PIs), such as amprenavir, atazanavir, indinavir, loprinavir, nelfinavir, ritonavir and saquinavir. Use of protease inhibitors in tritherapy regimens permit more ambitious therapeutic strategies. Reverse transcriptase/ribonuclease H: RT can be inhibited either by nucleoside RT inhibitors (NRTIs) or by non nucleoside RT inhibitors (NNRTIs). NRTIs act as chain terminators, whereas NNRTIs inhibit DNA polymerization by binding a small hydrophobic pocket near the RT active site and inducing an allosteric change in this region. Classical NRTIs are abacavir, adefovir (PMEA), didanosine (ddI), lamivudine (3TC), stavudine (d4T), tenofovir (PMPA), zalcitabine (ddC), and zidovudine (AZT). Classical NNRTIs are atevirdine (BHAP U-87201E), delavirdine, efavirenz (DMP-266), emivirine (I-EBU), and nevirapine (BI-RG-587). The tritherapies used as a basic effective treatment of AIDS associate two NRTIs and one NNRTI. Mediates, with Gag polyprotein, the essential events in virion assembly, including binding the plasma membrane, making the protein-protein interactions necessary to create spherical particles, recruiting the viral Env proteins, and packaging the genomic RNA via direct interactions with the RNA packaging sequence (Psi). Gag-Pol polyprotein may regulate its own translation, by the binding genomic RNA in the 5'-UTR. At low concentration, the polyprotein would promote translation, whereas at high concentration, the polyprotein would encapsidate genomic RNA and then shut off translation. Functionally, targets the polyprotein to the plasma membrane via a multipartite membrane-binding signal, that includes its myristoylated N-terminus. Matrix protein is part of the pre-integration complex. Implicated in the release from host cell mediated by Vpu. Binds to RNA. Its function is as follows. Forms the conical core that encapsulates the genomic RNA-nucleocapsid complex in the virion. Most core are conical, with only 7% tubular. The core is constituted by capsid protein hexamer subunits. The core is disassembled soon after virion entry. Host restriction factors such as TRIM5-alpha or TRIMCyp bind retroviral capsids and cause premature capsid disassembly, leading to blocks in reverse transcription. Capsid restriction by TRIM5 is one of the factors which restricts HIV-1 to the human species. Host PIN1 apparently facilitates the virion uncoating. On the other hand, interactions with PDZD8 or CYPA stabilize the capsid. In terms of biological role, encapsulates and protects viral dimeric unspliced genomic RNA (gRNA). Binds these RNAs through its zinc fingers. Acts as a nucleic acid chaperone which is involved in rearangement of nucleic acid secondary structure during gRNA retrotranscription. Also facilitates template switch leading to recombination. As part of the polyprotein, participates in gRNA dimerization, packaging, tRNA incorporation and virion assembly. Aspartyl protease that mediates proteolytic cleavages of Gag and Gag-Pol polyproteins during or shortly after the release of the virion from the plasma membrane. Cleavages take place as an ordered, step-wise cascade to yield mature proteins. This process is called maturation. Displays maximal activity during the budding process just prior to particle release from the cell. Also cleaves Nef and Vif, probably concomitantly with viral structural proteins on maturation of virus particles. Hydrolyzes host EIF4GI and PABP1 in order to shut off the capped cellular mRNA translation. The resulting inhibition of cellular protein synthesis serves to ensure maximal viral gene expression and to evade host immune response. Functionally, multifunctional enzyme that converts the viral RNA genome into dsDNA in the cytoplasm, shortly after virus entry into the cell. This enzyme displays a DNA polymerase activity that can copy either DNA or RNA templates, and a ribonuclease H (RNase H) activity that cleaves the RNA strand of RNA-DNA heteroduplexes in a partially processive 3' to 5' endonucleasic mode. Conversion of viral genomic RNA into dsDNA requires many steps. A tRNA(3)-Lys binds to the primer-binding site (PBS) situated at the 5'-end of the viral RNA. RT uses the 3' end of the tRNA primer to perform a short round of RNA-dependent minus-strand DNA synthesis. The reading proceeds through the U5 region and ends after the repeated (R) region which is present at both ends of viral RNA. The portion of the RNA-DNA heteroduplex is digested by the RNase H, resulting in a ssDNA product attached to the tRNA primer. This ssDNA/tRNA hybridizes with the identical R region situated at the 3' end of viral RNA. This template exchange, known as minus-strand DNA strong stop transfer, can be either intra- or intermolecular. RT uses the 3' end of this newly synthesized short ssDNA to perform the RNA-dependent minus-strand DNA synthesis of the whole template. RNase H digests the RNA template except for two polypurine tracts (PPTs) situated at the 5'-end and near the center of the genome. It is not clear if both polymerase and RNase H activities are simultaneous. RNase H probably can proceed both in a polymerase-dependent (RNA cut into small fragments by the same RT performing DNA synthesis) and a polymerase-independent mode (cleavage of remaining RNA fragments by free RTs). Secondly, RT performs DNA-directed plus-strand DNA synthesis using the PPTs that have not been removed by RNase H as primers. PPTs and tRNA primers are then removed by RNase H. The 3' and 5' ssDNA PBS regions hybridize to form a circular dsDNA intermediate. Strand displacement synthesis by RT to the PBS and PPT ends produces a blunt ended, linear dsDNA copy of the viral genome that includes long terminal repeats (LTRs) at both ends. Its function is as follows. Catalyzes viral DNA integration into the host chromosome, by performing a series of DNA cutting and joining reactions. This enzyme activity takes place after virion entry into a cell and reverse transcription of the RNA genome in dsDNA. The first step in the integration process is 3' processing. This step requires a complex comprising the viral genome, matrix protein, Vpr and integrase. This complex is called the pre-integration complex (PIC). The integrase protein removes 2 nucleotides from each 3' end of the viral DNA, leaving recessed CA OH's at the 3' ends. In the second step, the PIC enters cell nucleus. This process is mediated through integrase and Vpr proteins, and allows the virus to infect a non dividing cell. This ability to enter the nucleus is specific of lentiviruses, other retroviruses cannot and rely on cell division to access cell chromosomes. In the third step, termed strand transfer, the integrase protein joins the previously processed 3' ends to the 5' ends of strands of target cellular DNA at the site of integration. The 5'-ends are produced by integrase-catalyzed staggered cuts, 5 bp apart. A Y-shaped, gapped, recombination intermediate results, with the 5'-ends of the viral DNA strands and the 3' ends of target DNA strands remaining unjoined, flanking a gap of 5 bp. The last step is viral DNA integration into host chromosome. This involves host DNA repair synthesis in which the 5 bp gaps between the unjoined strands are filled in and then ligated. Since this process occurs at both cuts flanking the HIV genome, a 5 bp duplication of host DNA is produced at the ends of HIV-1 integration. Alternatively, Integrase may catalyze the excision of viral DNA just after strand transfer, this is termed disintegration. The protein is Gag-Pol polyprotein (gag-pol) of Human immunodeficiency virus type 2 subtype A (isolate D194) (HIV-2).